The following is a 211-amino-acid chain: Proteasome subunit beta (211 aa).

Residues 1-9 (MSEAETLKG) constitute a propeptide, removed in mature form; by autocatalysis. Catalysis depends on Thr10, which acts as the Nucleophile.

The protein belongs to the peptidase T1B family. As to quaternary structure, the 20S proteasome core is composed of 14 alpha and 14 beta subunits that assemble into four stacked heptameric rings, resulting in a barrel-shaped structure. The two inner rings, each composed of seven catalytic beta subunits, are sandwiched by two outer rings, each composed of seven alpha subunits. The catalytic chamber with the active sites is on the inside of the barrel. Has a gated structure, the ends of the cylinder being occluded by the N-termini of the alpha-subunits. Is capped at one or both ends by the proteasome regulatory ATPase, PAN.

Its subcellular location is the cytoplasm. The enzyme catalyses Cleavage of peptide bonds with very broad specificity.. The formation of the proteasomal ATPase PAN-20S proteasome complex, via the docking of the C-termini of PAN into the intersubunit pockets in the alpha-rings, triggers opening of the gate for substrate entry. Interconversion between the open-gate and close-gate conformations leads to a dynamic regulation of the 20S proteasome proteolysis activity. In terms of biological role, component of the proteasome core, a large protease complex with broad specificity involved in protein degradation. This Methanosphaerula palustris (strain ATCC BAA-1556 / DSM 19958 / E1-9c) protein is Proteasome subunit beta.